A 145-amino-acid chain; its full sequence is Immunity protein CdiI (145 aa).

In terms of assembly, interacts with cognate toxin fragment CdiA-CT.

Its function is as follows. Immunity protein component of a toxin-immunity protein module, which functions as a cellular contact-dependent growth inhibition (CDI) system. CDI modules allow bacteria to communicate with and inhibit the growth of closely related neighboring bacteria in a contact-dependent fashion. Protects cells against the 16S rRNase activity of CdiA-CT, its cognate toxin protein, but not against the toxic effects of a similar rRNase, non-cognate CdiA-CT from E.chrysanthemi strain EC16. In Enterobacter cloacae subsp. cloacae (strain ATCC 13047 / DSM 30054 / NBRC 13535 / NCTC 10005 / WDCM 00083 / NCDC 279-56), this protein is Immunity protein CdiI.